A 269-amino-acid chain; its full sequence is Putative pyruvate, phosphate dikinase regulatory protein (269 aa).

An ADP-binding site is contributed by 147–154 (GVSRSSKT).

Belongs to the pyruvate, phosphate/water dikinase regulatory protein family. PDRP subfamily.

The catalysed reaction is N(tele)-phospho-L-histidyl/L-threonyl-[pyruvate, phosphate dikinase] + ADP = N(tele)-phospho-L-histidyl/O-phospho-L-threonyl-[pyruvate, phosphate dikinase] + AMP + H(+). It catalyses the reaction N(tele)-phospho-L-histidyl/O-phospho-L-threonyl-[pyruvate, phosphate dikinase] + phosphate + H(+) = N(tele)-phospho-L-histidyl/L-threonyl-[pyruvate, phosphate dikinase] + diphosphate. In terms of biological role, bifunctional serine/threonine kinase and phosphorylase involved in the regulation of the pyruvate, phosphate dikinase (PPDK) by catalyzing its phosphorylation/dephosphorylation. The protein is Putative pyruvate, phosphate dikinase regulatory protein of Trichlorobacter lovleyi (strain ATCC BAA-1151 / DSM 17278 / SZ) (Geobacter lovleyi).